Reading from the N-terminus, the 151-residue chain is Small ribosomal subunit protein bS6 (151 aa).

Residues 98 to 151 (EESPIQKAEKENRERKNRAERRAAEAAAATETEKSESEESAEEETSTDTTGEEE) are disordered. Over residues 135–151 (EESAEEETSTDTTGEEE) the composition is skewed to acidic residues.

The protein belongs to the bacterial ribosomal protein bS6 family.

Its function is as follows. Binds together with bS18 to 16S ribosomal RNA. In Teredinibacter turnerae (strain ATCC 39867 / T7901), this protein is Small ribosomal subunit protein bS6.